Consider the following 495-residue polypeptide: MNKKRSPKTVLAAGPSSKRGDLIELAVTALDEDGNGIGTHDGTNVHVIGALPDERVRARLTHVGKRHLHAEAVEVLTPSRARLAQPSCKRAGSCDGCPLIVMHYPDQLNWKRTFTERQIRRYQTLGAAEVLATLPSPNQLHYRNSAKLVVSGTFRRPVIGIYRRNSHQVMDIGTCPLHHPLINRVVTAVKEGIAKCKVQVYNPRTGSGLLRYLVVRISERTGTAMAVFVTVERNYNEIHHLAKHLQQSVPQVEVVVQNVNSSEGNVILGQRDYFLTRQHALTEELGGIRFTISPRSFFQVNSGGARIIYETVRQWSSLTGKESVVDLYCGIGGIALFLAGTAREVHGIEVVEAAVNDAESNARLNRIHNCSFEAGDAAELIEELVEEGERLDLVVLNPPRKGCDAGVLNKVAAAGPARIVYVSCAPATLARDLDILAGLGYATLRVQPVDMFPQTPHVENIALLVKKLPRNDRLESPAKERSRPRASHKAKGGAV.

One can recognise a TRAM domain in the interval 16 to 74 (SSKRGDLIELAVTALDEDGNGIGTHDGTNVHVIGALPDERVRARLTHVGKRHLHAEAVE). Positions 88, 94, 97, and 175 each coordinate [4Fe-4S] cluster. Glutamine 299, tyrosine 328, glutamate 349, and asparagine 397 together coordinate S-adenosyl-L-methionine. Cysteine 424 acts as the Nucleophile in catalysis. Basic and acidic residues predominate over residues 472–483 (DRLESPAKERSR). Residues 472–495 (DRLESPAKERSRPRASHKAKGGAV) form a disordered region. Positions 484 to 495 (PRASHKAKGGAV) are enriched in basic residues.

The protein belongs to the class I-like SAM-binding methyltransferase superfamily. RNA M5U methyltransferase family.

This is an uncharacterized protein from Geobacter sulfurreducens (strain ATCC 51573 / DSM 12127 / PCA).